Here is a 487-residue protein sequence, read N- to C-terminus: N-succinylglutamate 5-semialdehyde dehydrogenase (487 aa).

Residue 221 to 226 (GSSRTG) coordinates NAD(+). Active-site residues include glutamate 244 and cysteine 278.

It belongs to the aldehyde dehydrogenase family. AstD subfamily.

It catalyses the reaction N-succinyl-L-glutamate 5-semialdehyde + NAD(+) + H2O = N-succinyl-L-glutamate + NADH + 2 H(+). It functions in the pathway amino-acid degradation; L-arginine degradation via AST pathway; L-glutamate and succinate from L-arginine: step 4/5. In terms of biological role, catalyzes the NAD-dependent reduction of succinylglutamate semialdehyde into succinylglutamate. The protein is N-succinylglutamate 5-semialdehyde dehydrogenase of Ectopseudomonas mendocina (strain ymp) (Pseudomonas mendocina).